The sequence spans 1496 residues: DNA-directed RNA polymerase subunit beta' (1496 aa).

Zn(2+) is bound by residues C70, C72, C85, and C88. Mg(2+) is bound by residues D461, D463, and D465. C908, C982, C989, and C992 together coordinate Zn(2+). Positions 1467-1496 are disordered; it reads DKDMQVEGESEVPAIPPVAEGSAPEAPPAE.

It belongs to the RNA polymerase beta' chain family. The RNAP catalytic core consists of 2 alpha, 1 beta, 1 beta' and 1 omega subunit. When a sigma factor is associated with the core the holoenzyme is formed, which can initiate transcription. The cofactor is Mg(2+). Requires Zn(2+) as cofactor.

The catalysed reaction is RNA(n) + a ribonucleoside 5'-triphosphate = RNA(n+1) + diphosphate. Functionally, DNA-dependent RNA polymerase catalyzes the transcription of DNA into RNA using the four ribonucleoside triphosphates as substrates. In Paramagnetospirillum magneticum (strain ATCC 700264 / AMB-1) (Magnetospirillum magneticum), this protein is DNA-directed RNA polymerase subunit beta'.